A 201-amino-acid chain; its full sequence is MSRYRGPRFKKIRRLGALPGLTSKRPRAGSDLRNQSRSGKKSQYRIRLEEKQKLRFHYGLTERQLLKYVRIAGKAKGSTGQVLLQLLEMRLDNILFRLGMALTIPQARQLVNHGHILVNGRIVDIPSYRCKPRDIITVKDEQNSRTLVQNLLDSSAPEELPKHLTLHTFQYEGLVNQIIDRKCVGLKINELLVVEYYSRQT.

Residues 20–44 (GLTSKRPRAGSDLRNQSRSGKKSQY) form a disordered region. The S4 RNA-binding domain occupies 89-152 (MRLDNILFRL…NSRTLVQNLL (64 aa)).

Belongs to the universal ribosomal protein uS4 family. In terms of assembly, part of the 30S ribosomal subunit. Contacts protein S5. The interaction surface between S4 and S5 is involved in control of translational fidelity.

It is found in the plastid. The protein localises to the chloroplast. One of the primary rRNA binding proteins, it binds directly to 16S rRNA where it nucleates assembly of the body of the 30S subunit. Its function is as follows. With S5 and S12 plays an important role in translational accuracy. This Aethionema cordifolium (Lebanon stonecress) protein is Small ribosomal subunit protein uS4c (rps4).